We begin with the raw amino-acid sequence, 245 residues long: NAD-dependent protein deacylase (245 aa).

Positions 1 to 245 (MEAVWESARI…RLSRAMGIDI (245 aa)) constitute a Deacetylase sirtuin-type domain. 22 to 41 (GAGISAESGIPTFRGKDGLW) is a binding site for NAD(+). Residues Tyr-66 and Arg-69 each coordinate substrate. Residue 100 to 103 (QNVD) participates in NAD(+) binding. The active-site Proton acceptor is His-118. Zn(2+) is bound by residues Cys-126, Cys-129, Cys-146, and Cys-149. NAD(+)-binding positions include 186 to 188 (GTS), 212 to 214 (NPE), and Met-241.

The protein belongs to the sirtuin family. Class III subfamily. Requires Zn(2+) as cofactor.

It localises to the cytoplasm. The catalysed reaction is N(6)-acetyl-L-lysyl-[protein] + NAD(+) + H2O = 2''-O-acetyl-ADP-D-ribose + nicotinamide + L-lysyl-[protein]. It carries out the reaction N(6)-succinyl-L-lysyl-[protein] + NAD(+) + H2O = 2''-O-succinyl-ADP-D-ribose + nicotinamide + L-lysyl-[protein]. In terms of biological role, NAD-dependent lysine deacetylase and desuccinylase that specifically removes acetyl and succinyl groups on target proteins. Modulates the activities of several proteins which are inactive in their acylated form. Deacetylates the N-terminal lysine residue of Alba, the major archaeal chromatin protein and that, in turn, increases Alba's DNA binding affinity, thereby repressing transcription. This Aeropyrum pernix (strain ATCC 700893 / DSM 11879 / JCM 9820 / NBRC 100138 / K1) protein is NAD-dependent protein deacylase.